The chain runs to 105 residues: Translation initiation factor 1A (105 aa).

Residues isoleucine 18 to threonine 92 enclose the S1-like domain.

It belongs to the eIF-1A family.

In terms of biological role, seems to be required for maximal rate of protein biosynthesis. Enhances ribosome dissociation into subunits and stabilizes the binding of the initiator Met-tRNA(I) to 40 S ribosomal subunits. The sequence is that of Translation initiation factor 1A (eIF1A) from Methanocorpusculum labreanum (strain ATCC 43576 / DSM 4855 / Z).